Reading from the N-terminus, the 394-residue chain is Flap endonuclease 1 (394 aa).

An N-domain region spans residues 1–104 (MGIKQLFTII…GELARRYQRK (104 aa)). Residue aspartate 34 participates in Mg(2+) binding. Arginine 47 and arginine 70 together coordinate DNA. Aspartate 86, glutamate 158, glutamate 160, aspartate 179, and aspartate 181 together coordinate Mg(2+). The segment at 122 to 253 (DVEKFSRRTV…STALKLIREH (132 aa)) is I-domain. Glutamate 158 is a DNA binding site. The DNA site is built by glycine 231 and aspartate 233. Aspartate 233 serves as a coordination point for Mg(2+). The interaction with PCNA stretch occupies residues 340-348 (QQQRLEGFF). A disordered region spans residues 358 to 394 (QKAHKRKLEVKAEEAKKKLKAEKKEKAKAKARPRGTA). Basic residues predominate over residues 374–394 (KKLKAEKKEKAKAKARPRGTA).

It belongs to the XPG/RAD2 endonuclease family. FEN1 subfamily. Interacts with PCNA. Three molecules of FEN1 bind to one PCNA trimer with each molecule binding to one PCNA monomer. PCNA stimulates the nuclease activity without altering cleavage specificity. Mg(2+) serves as cofactor. Phosphorylated. Phosphorylation upon DNA damage induces relocalization to the nuclear plasma.

The protein resides in the nucleus. It is found in the nucleolus. It localises to the nucleoplasm. The protein localises to the mitochondrion. Functionally, structure-specific nuclease with 5'-flap endonuclease and 5'-3' exonuclease activities involved in DNA replication and repair. During DNA replication, cleaves the 5'-overhanging flap structure that is generated by displacement synthesis when DNA polymerase encounters the 5'-end of a downstream Okazaki fragment. It enters the flap from the 5'-end and then tracks to cleave the flap base, leaving a nick for ligation. Also involved in the long patch base excision repair (LP-BER) pathway, by cleaving within the apurinic/apyrimidinic (AP) site-terminated flap. Acts as a genome stabilization factor that prevents flaps from equilibrating into structures that lead to duplications and deletions. Also possesses 5'-3' exonuclease activity on nicked or gapped double-stranded DNA, and exhibits RNase H activity. Also involved in replication and repair of rDNA and in repairing mitochondrial DNA. The polypeptide is Flap endonuclease 1 (Pyricularia oryzae (strain 70-15 / ATCC MYA-4617 / FGSC 8958) (Rice blast fungus)).